The sequence spans 84 residues: Small ribosomal subunit protein uS17 (84 aa).

This sequence belongs to the universal ribosomal protein uS17 family. Part of the 30S ribosomal subunit.

One of the primary rRNA binding proteins, it binds specifically to the 5'-end of 16S ribosomal RNA. The protein is Small ribosomal subunit protein uS17 of Vibrio vulnificus (strain CMCP6).